The chain runs to 190 residues: Outer-membrane lipoprotein LolB (190 aa).

A signal peptide spans 1-16 (MRLRFSLLLTVSLLAG). Cysteine 17 is lipidated: N-palmitoyl cysteine. Cysteine 17 carries S-diacylglycerol cysteine lipidation.

The protein belongs to the LolB family. As to quaternary structure, monomer.

Its subcellular location is the cell outer membrane. Its function is as follows. Plays a critical role in the incorporation of lipoproteins in the outer membrane after they are released by the LolA protein. This chain is Outer-membrane lipoprotein LolB, found in Dechloromonas aromatica (strain RCB).